A 786-amino-acid polypeptide reads, in one-letter code: Rho GTPase-activating protein 10 (786 aa).

Positions 7 to 262 (EFSDCYLDSP…IRQNPKDQKR (256 aa)) constitute a BAR domain. One can recognise a PH domain in the interval 265-372 (QFTAEGYLYV…WLEALGGKEA (108 aa)). In terms of domain architecture, Rho-GAP spans 389 to 574 (AQLDKMGFTI…ILIENHEKIF (186 aa)). Disordered stretches follow at residues 584–609 (EPTCLSASPPNAPPRQSKRQGQRTKR) and 622–714 (EGDS…PFPL). Residues 599–609 (QSKRQGQRTKR) show a composition bias toward basic residues. The span at 634-649 (PSSSQDSLSTPSPTTS) shows a compositional bias: low complexity. Polar residues predominate over residues 673-701 (TATTPSQTRPSMVQWLNMQSPTTPSSNPA). Residues 702-714 (GTPPSPRMSPFPL) are compositionally biased toward pro residues. The 59-residue stretch at 728-786 (VINRKARAVYPCEAEHSSELSFEIGAIFEDVQTSREPGWLEGTLNGKRGLIPQNYVKLL) folds into the SH3 domain.

As to quaternary structure, interacts with PKN3. Interacts with caspase-activated PAK2 proteolytic fragment PAK-2p34; the interaction does not affect ARHGAP10 GTPase activation activity towards RHOA and CDC42. Interacts via its SH3 domain with PTK2/FAK1. Interacts with PTK2B/PYK2; the interaction negatively regulates ARHGAP10 GTPase-activating activity. Interacts with MICAL1 and WDR44; complex formation might transit from GRAF2/ARHGAP10-MICAL1 to GRAF2/ARHGAP10-WDR44 complexes. In terms of processing, phosphorylated on tyrosine residues, probably involving PTK2B/PYK2. As to expression, high levels of expression in brain, testes, liver, heart and kidney.

Its subcellular location is the cytoplasm. It localises to the perinuclear region. It is found in the cell membrane. The protein localises to the endosome membrane. Functionally, GTPase-activating protein that catalyzes the conversion of active GTP-bound Rho GTPases to their inactive GDP-bound form, thus suppressing various Rho GTPase-mediated cellular processes. Also converts Cdc42 to an inactive GDP-bound state. Essential for PTKB2 regulation of cytoskeletal organization via Rho family GTPases. Inhibits PAK2 proteolytic fragment PAK-2p34 kinase activity and changes its localization from the nucleus to the perinuclear region. Stabilizes PAK-2p34 thereby increasing stimulation of cell death. Associates with MICAL1 on the endosomal membrane to promote Rab8-Rab10-dependent tubule extension. After dissociation with MICAL1, recruits WDR44 which connects the endoplasmic reticulum (ER) with the endosomal tubule, thereby participating in the export of a subset of neosynthesized proteins. The chain is Rho GTPase-activating protein 10 (Arhgap10) from Mus musculus (Mouse).